Reading from the N-terminus, the 901-residue chain is HTH-type transcriptional regulator MalT (901 aa).

39 to 46 contacts ATP; it reads SPAGYGKT. The HTH luxR-type domain occupies 829-894; sequence ELIRTSPLTQ…DAVQHAQQLL (66 aa). Residues 853 to 872 constitute a DNA-binding region (H-T-H motif); the sequence is NEQIAGELAVAATTIKTHIR.

This sequence belongs to the MalT family. Monomer in solution. Oligomerizes to an active state in the presence of the positive effectors ATP and maltotriose.

Activated by ATP and maltotriose, which are both required for DNA binding. In terms of biological role, positively regulates the transcription of the maltose regulon whose gene products are responsible for uptake and catabolism of malto-oligosaccharides. Specifically binds to the promoter region of its target genes, recognizing a short DNA motif called the MalT box. The sequence is that of HTH-type transcriptional regulator MalT from Salmonella heidelberg (strain SL476).